The chain runs to 300 residues: Cyclic nucleotide synthase CdnE01 (300 aa).

Mg(2+)-binding residues include aspartate 63, aspartate 65, and aspartate 137.

It belongs to the CD-NTase family. E01 subfamily. The cofactor is Mg(2+).

Binds to and probably activated by a virus-derived, approximately 400 nucleotide RNA (called CBASS-activating bacteriophage RNA, cabRNA) that begins in the viral terminase subunit terS and extends into terL, as well as by a shorter RNA with part of the cabRNA sequence able to form a hairpin. RNA secondary and/or tertiary structure, as well as viral infection itself, are important for CdnE activation. Functionally, cyclic nucleotide synthase (second messenger synthase) of a CBASS antivirus system. CBASS (cyclic oligonucleotide-based antiphage signaling system) provides immunity against bacteriophage. The CD-NTase protein synthesizes cyclic nucleotides in response to infection; these serve as specific second messenger signals. The signals activate a diverse range of effectors, leading to bacterial cell death and thus abortive phage infection. A type I-B CBASS system. Protects S.aureus against phage infection. When the CBASS operon (cdnE and the following gene) is introduced in S.aureus strain RN4220 there is strong protection against lytic DNA phages 80alpha-vir and phi-NM1-gamma-6 but little to no protection against phages phi-NM4-gamma-4 or phi-12-gamma-3. This is Cyclic nucleotide synthase CdnE01 from Staphylococcus haemolyticus.